The chain runs to 72 residues: Lantibiotic lichenicidin VK21 A2 (72 aa).

Residues 1–21 are disordered; that stretch reads MKTMKNSAAREAFKGANHPAG. A propeptide spanning residues 1–40 is cleaved from the precursor; that stretch reads MKTMKNSAAREAFKGANHPAGMVSEEELKALVGGNDVNPE. Thr-41 carries the post-translational modification 2-oxobutanoic acid. (Z)-2,3-didehydrobutyrine is present on residues Thr-42, Thr-45, and Thr-46. A cross-link (lanthionine (Ser-Cys)) is located at residues 47–51; that stretch reads SSWTC. Ser-48 is subject to 2,3-didehydroalanine (Ser). Thr-53 and Thr-57 each carry (Z)-2,3-didehydrobutyrine. The segment at residues 59–63 is a cross-link (lanthionine (Ser-Cys)); sequence SASLC. 2 cross-links (beta-methyllanthionine (Thr-Cys)) span residues 65 to 68 and 69 to 72; these read TTKC and TSRC. Thr-66 carries the (Z)-2,3-didehydrobutyrine modification.

Post-translationally, maturation of lantibiotics involves the enzymatic conversion of Thr, and Ser into dehydrated AA and the formation of thioether bonds with cysteine. This is followed by membrane translocation and cleavage of the modified precursor. The 2,3-didehydrobutyrines are determined to be the Z-isomers.

The protein resides in the secreted. In terms of biological role, lanthionine-containing peptide antibiotic (lantibiotic) active on Gram-positive bacteria. The bactericidal activity of lantibiotics is based on depolarization of energized bacterial cytoplasmic membranes, initiated by the formation of aqueous transmembrane pores. When present individually, LchA2 exhibits activity towards B.subtilis L1 (IC(50)=30 uM), Rhodococcus sp. SS2 (IC(50)=16.6 uM), M.luteus B1314 (IC(50)=2.6 uM), B.megaterium VKM41 (IC(50)=2 uM), S.aureus 209p (IC(50)=20 uM), B.pumilus 2001, B.globigii I, B.amyloliquefaciens I, M.smegmatis 1171 and M.phlei 1291. However, when combined with LchA1, it displays much stronger activity against B.subtilis L1 (IC(50)=0.64 uM), Rhodococcus sp. SS2 (IC(50)=0.64 uM), M.luteus B1314 (IC(50)=0.09 uM), B.megaterium VKM41 (IC(50)=0.12 uM) and S.aureus 209p (IC(50)=0.64 uM). The activity of the combined LchA1 and LchA2 peptides is strongest at a molar ratio of 1. Even when applied at 17-fold concentration of the highest IC(50) values for Gram-positive bacteria, neither the individual nor the combined peptides display activity against Gram-negative bacteria P.aeruginosa PAO1, P.putida I-97 or E.coli C600. This chain is Lantibiotic lichenicidin VK21 A2, found in Bacillus licheniformis.